The following is a 293-amino-acid chain: uncharacterized protein (293 aa).

The active site involves glutamate 47.

The protein belongs to the PhzF family.

This is an uncharacterized protein from Bacillus subtilis (strain 168).